A 345-amino-acid polypeptide reads, in one-letter code: S-adenosylmethionine:tRNA ribosyltransferase-isomerase (345 aa).

The protein belongs to the QueA family. As to quaternary structure, monomer.

The protein resides in the cytoplasm. It carries out the reaction 7-aminomethyl-7-carbaguanosine(34) in tRNA + S-adenosyl-L-methionine = epoxyqueuosine(34) in tRNA + adenine + L-methionine + 2 H(+). Its pathway is tRNA modification; tRNA-queuosine biosynthesis. Transfers and isomerizes the ribose moiety from AdoMet to the 7-aminomethyl group of 7-deazaguanine (preQ1-tRNA) to give epoxyqueuosine (oQ-tRNA). This Shewanella amazonensis (strain ATCC BAA-1098 / SB2B) protein is S-adenosylmethionine:tRNA ribosyltransferase-isomerase.